The following is a 352-amino-acid chain: S-adenosylmethionine:tRNA ribosyltransferase-isomerase (352 aa).

This sequence belongs to the QueA family. In terms of assembly, monomer.

The protein localises to the cytoplasm. The enzyme catalyses 7-aminomethyl-7-carbaguanosine(34) in tRNA + S-adenosyl-L-methionine = epoxyqueuosine(34) in tRNA + adenine + L-methionine + 2 H(+). The protein operates within tRNA modification; tRNA-queuosine biosynthesis. In terms of biological role, transfers and isomerizes the ribose moiety from AdoMet to the 7-aminomethyl group of 7-deazaguanine (preQ1-tRNA) to give epoxyqueuosine (oQ-tRNA). In Cupriavidus necator (strain ATCC 17699 / DSM 428 / KCTC 22496 / NCIMB 10442 / H16 / Stanier 337) (Ralstonia eutropha), this protein is S-adenosylmethionine:tRNA ribosyltransferase-isomerase.